Here is a 184-residue protein sequence, read N- to C-terminus: Class II hydrophobin 6 (184 aa).

The first 16 residues, 1 to 16 (MNFMLLSAALASMAVA), serve as a signal peptide directing secretion. 4 disulfides stabilise this stretch: Cys122/Cys169, Cys130/Cys160, Cys131/Cys143, and Cys170/Cys181.

It belongs to the cerato-ulmin hydrophobin family. Homotetramer. Further self-assembles to form highly ordered films at water-air interfaces through intermolecular interactions. As to expression, expressed in the mycellium.

It localises to the secreted. In terms of biological role, aerial growth, conidiation, and dispersal of filamentous fungi in the environment rely upon a capability of their secreting small amphipathic proteins called hydrophobins (HPBs) with low sequence identity. Class I can self-assemble into an outermost layer of rodlet bundles on aerial cell surfaces, conferring cellular hydrophobicity that supports fungal growth, development and dispersal; whereas Class II form highly ordered films at water-air interfaces through intermolecular interactions but contribute nothing to the rodlet structure. Hcf-6 is a class II hydrophobin that is involved in adhesion and in tomato plants infection. Is secreted to form a coat both around and beneath the fungus. In Passalora fulva (Tomato leaf mold), this protein is Class II hydrophobin 6.